The chain runs to 83 residues: Putative beta-neurotoxin RjAa12f (83 aa).

An N-terminal signal peptide occupies residues 1 to 18; that stretch reads MKILIFIIASFMLIGVEC. Residues 19 to 82 enclose the LCN-type CS-alpha/beta domain; the sequence is KEGYPMGRDG…VWDSSTNKCG (64 aa). Disulfide bonds link cysteine 29/cysteine 81, cysteine 33/cysteine 55, cysteine 40/cysteine 62, and cysteine 44/cysteine 64. A propeptide is located at residue glycine 83.

Post-translationally, contains 4 disulfide bonds. Expressed by the venom gland.

The protein localises to the secreted. Functionally, beta toxins bind voltage-independently at site-4 of sodium channels (Nav) and shift the voltage of activation toward more negative potentials thereby affecting sodium channel activation and promoting spontaneous and repetitive firing. This toxin is lethal to insects (A.domestica). It is not toxic to mice and does not affect mammal F11 sodium channels. The polypeptide is Putative beta-neurotoxin RjAa12f (Rhopalurus junceus (Caribbean blue scorpion)).